Here is a 516-residue protein sequence, read N- to C-terminus: MTDIHNHKILILDFGSQYTQLIARRVREVGVFCEIFPHDIADDFIKDYHAKGIILSGGPESVYDSDVKAPEIVFELGVPVLGICYGMQTMVMQHGGEVKGADQSEFGKAIVNILKSSENIFSNLKTEQSVWMSHSDKVTQTGEHFEVIASSTNAPVAAVAHKSKPFYGVQFHPETTHTENGKQIIENFALNICKCDALWNIENIIENDIKEIKKQVGSDRVILGLSGGVDSSVVAAILHEAIGDQLTCIFVDTGLLRLNEGDQVMEVFAEHMDINVIRVNAKNRFLDALKGIGDPEEKRKIIGKLFVDIFDEEAAKIENAKWLAQGTIYSDVIESAGNSQSKAHVIKSHHNVGGLPKEMKLKLLEPLRELFKDEVRKLGLGLGLPYNMLYRHPFPGPGLGVRILGEIKKEYVETLQKADAIFTEELYKHNLYHDISQAFGVFLPVKSVGVVGDQRRYEYVIALRAVVSIDFMTATWANLPYDFLSIVSNRIVNEVKQVSRVVYDVTGKPPGTIEWE.

Residues 8 to 198 (KILILDFGSQ…ALNICKCDAL (191 aa)) enclose the Glutamine amidotransferase type-1 domain. The active-site Nucleophile is the cysteine 84. Active-site residues include histidine 172 and glutamate 174. A GMPS ATP-PPase domain is found at 199-391 (WNIENIIEND…LGLPYNMLYR (193 aa)). 226–232 (SGGVDSS) is a binding site for ATP.

In terms of assembly, homodimer.

It carries out the reaction XMP + L-glutamine + ATP + H2O = GMP + L-glutamate + AMP + diphosphate + 2 H(+). It participates in purine metabolism; GMP biosynthesis; GMP from XMP (L-Gln route): step 1/1. Its function is as follows. Catalyzes the synthesis of GMP from XMP. This Francisella philomiragia subsp. philomiragia (strain ATCC 25017 / CCUG 19701 / FSC 153 / O#319-036) protein is GMP synthase [glutamine-hydrolyzing].